A 1647-amino-acid polypeptide reads, in one-letter code: Ras GTPase-activating-like protein IQG1 (1647 aa).

A disordered region spans residues 18-51 (DTTATTTTTTTSNVLQPSNRLNSPTKFNRKSLDN). A compositionally biased stretch (low complexity) spans 19–28 (TTATTTTTTT). Positions 29–43 (SNVLQPSNRLNSPTK) are enriched in polar residues. S48 is modified (phosphoserine). 3 positions are modified to phosphothreonine: T66, T72, and T82. S83, S91, and S139 each carry phosphoserine. Residues 143–162 (FNTQSNVHTPLKQLNQPIGT) show a composition bias toward polar residues. The interval 143–175 (FNTQSNVHTPLKQLNQPIGTPSSSSLSPAKNAS) is disordered. The segment covering 163–175 (PSSSSLSPAKNAS) has biased composition (low complexity). Residues S165, S167, and S169 each carry the phosphoserine modification. The Calponin-homology (CH) domain maps to 184–291 (LCRIEAIKQW…FCLHALSYIL (108 aa)). The interval 326 to 427 (PLPNFSSADT…STSNAKLELH (102 aa)) is disordered. Over residues 342–355 (TSNNNSSTTSATAA) the composition is skewed to low complexity. Residue T367 is modified to Phosphothreonine. Residues 368 to 379 (PSPLKRPQQLQK) show a composition bias toward low complexity. S369 bears the Phosphoserine mark. Composition is skewed to basic and acidic residues over residues 380–392 (KQLE…KPEL) and 402–413 (ISRDDPFTDRVD). A phosphoserine mark is found at S433 and S440. 9 IQ domains span residues 467-478 (FQSLARGAVFRY), 528-539 (LQSIIRKNFVIN), 556-567 (LQSLIRGKLTRD), 586-597 (FQSLVRMKSIYS), 616-627 (LQSIARSQLYHR), 642-653 (IQSIIRRNAVIE), 672-683 (LQSIARGGVART), 734-745 (VQTLFRGVLSRY), and 764-775 (LQSVARGKLMRG). The stretch at 841–919 (LSDLKDLIIE…KKIELWQTLF (79 aa)) forms a coiled coil. The Ras-GAP domain occupies 958 to 1223 (PVRDSSITYH…DTVKSIISQA (266 aa)). S1064, S1068, S1088, S1383, and S1385 each carry phosphoserine.

As to quaternary structure, interacts with myosin MYO1 and its light chain MLC1. Interacts with BNI1. Interacts with BNR1. Interacts with CLB2. Interacts with CLB4. Interacts with CDC28. In terms of processing, hyperphosphorylated. Phosphorylation is cell cycle-dependent and peaks at the time of cytokinesis. Contains 21 consensus sites for cyclin-dependent kinases (CDKs). At least some of them are phosphorylated by the CLB2-CDC28 kinase complex. Mutation of 15 of the phosphorylation sites to Ala caused both premature assembly and delayed disassembly of the actomyosin ring, blocked interaction with the actin-nucleating proteins BNI1 and BNR1, and resulted in defects in cytokinesis.

It is found in the bud neck. In terms of biological role, required for the assembly and the contraction of the actomyosin ring at the bud neck during cytokinesis. The sequence is that of Ras GTPase-activating-like protein IQG1 (IQG1) from Candida albicans (strain SC5314 / ATCC MYA-2876) (Yeast).